A 793-amino-acid chain; its full sequence is MRVSLSSLQRFFSSPLPIKQIIEACDHIGIETEVETLLTCSFSSIITAKVLKTVPHPNADKLVVATLFDGQQEYQIVCGAPNCRPGIIIPLALPGAKLHDHEGNAYTIKKSKLRGVESQGMCCGADELGFAHLQTTERGLFEFPENTPLGESACALLADTFIECSLTPNLGHCASLLGLAREITYVTNVDLVLPPEFVCTPLETITKETSGQDQHLCPIFCCVKISGVSAQASPQELQNALGGLKQKSINSIVDITNYIMLSLGQPLHVYDANAVDIDSLHAQKAQKDEPLKLLNNEEVLVPQGTAIICDKDHTVGLAGVMGSLDSSFNDATTEIILEAAYFLPSAIRASQTHVPIHSEAAYRFTRGIDPNNVLPALYAAIHYIQKLFPNAKVSPIQVLGSTPQASTLSFRTELVGKILGMPLHASQVRDQLHSLGFNISSEENSILSVNIPSYRHDIQEEIDLVEEVCRTQPWKVENKKAPAIYSPMYSLKRRVVDFLANSGLQQFFTCDLLDTETAALNREEADCISLQGSKQATVLRDSLLPGLLKSTATNLNRQAPYVHAFEVGTTYTKKSSKYQETQSLGIILSGQAEEISWISHERPLSFYSIKGWIERLFQYLHVSSQAYAIQPYEHANFHPYQQAEIHLHKHVLGRFGTLHPQLCKKAQIKHSVFFAELSLDSLLHTQKKALHLYKPYPIYPSSFRDITLTVHESVPADSLRKKLLSFHSKWLESVSIISIYQNKNPTTQNKNVSLRLVFQDKERTLSNQEIEEEHERLLAMLNAQINDTKGTID.

In terms of domain architecture, tRNA-binding spans 39 to 154; sequence TCSFSSIITA…ENTPLGESAC (116 aa). The region spanning 403-481 is the B5 domain; it reads PQASTLSFRT…QPWKVENKKA (79 aa). Residues Asp457, Asp463, Glu466, and Glu467 each contribute to the Mg(2+) site. The 97-residue stretch at 697–793 folds into the FDX-ACB domain; that stretch reads PIYPSSFRDI…QINDTKGTID (97 aa).

The protein belongs to the phenylalanyl-tRNA synthetase beta subunit family. Type 1 subfamily. In terms of assembly, tetramer of two alpha and two beta subunits. Mg(2+) is required as a cofactor.

The protein localises to the cytoplasm. It catalyses the reaction tRNA(Phe) + L-phenylalanine + ATP = L-phenylalanyl-tRNA(Phe) + AMP + diphosphate + H(+). This is Phenylalanine--tRNA ligase beta subunit from Chlamydia caviae (strain ATCC VR-813 / DSM 19441 / 03DC25 / GPIC) (Chlamydophila caviae).